The following is a 148-amino-acid chain: Large ribosomal subunit protein bL9 (148 aa).

This sequence belongs to the bacterial ribosomal protein bL9 family.

Functionally, binds to the 23S rRNA. In Listeria monocytogenes serotype 4b (strain CLIP80459), this protein is Large ribosomal subunit protein bL9.